Reading from the N-terminus, the 173-residue chain is Large ribosomal subunit protein uL10 (173 aa).

The protein belongs to the universal ribosomal protein uL10 family. Part of the ribosomal stalk of the 50S ribosomal subunit. The N-terminus interacts with L11 and the large rRNA to form the base of the stalk. The C-terminus forms an elongated spine to which L12 dimers bind in a sequential fashion forming a multimeric L10(L12)X complex.

Functionally, forms part of the ribosomal stalk, playing a central role in the interaction of the ribosome with GTP-bound translation factors. In Myxococcus xanthus (strain DK1622), this protein is Large ribosomal subunit protein uL10.